The following is a 313-amino-acid chain: Cytosolic Fe-S cluster assembly factor NUBP1 homolog (313 aa).

Positions 1 to 25 (MSDVPEDANAGCPGTGSAGAGKASG) are disordered. [4Fe-4S] cluster contacts are provided by C12, C26, C29, and C35. Residue 66 to 73 (GKGGVGKS) coordinates ATP. The [4Fe-4S] cluster site is built by C240 and C243.

This sequence belongs to the Mrp/NBP35 ATP-binding proteins family. NUBP1/NBP35 subfamily. In terms of assembly, heterotetramer of 2 NUBP1 and 2 NUBP2 chains. [4Fe-4S] cluster is required as a cofactor.

It localises to the cytoplasm. The protein resides in the cell projection. Functionally, component of the cytosolic iron-sulfur (Fe/S) protein assembly (CIA) machinery. Required for maturation of extramitochondrial Fe-S proteins. The NUBP1-NUBP2 heterotetramer forms a Fe-S scaffold complex, mediating the de novo assembly of an Fe-S cluster and its transfer to target apoproteins. Regulates cilium formation and structure. The sequence is that of Cytosolic Fe-S cluster assembly factor NUBP1 homolog from Caenorhabditis briggsae.